A 126-amino-acid chain; its full sequence is Large ribosomal subunit protein bL12 (126 aa).

The protein belongs to the bacterial ribosomal protein bL12 family. In terms of assembly, homodimer. Part of the ribosomal stalk of the 50S ribosomal subunit. Forms a multimeric L10(L12)X complex, where L10 forms an elongated spine to which 2 to 4 L12 dimers bind in a sequential fashion. Binds GTP-bound translation factors.

Functionally, forms part of the ribosomal stalk which helps the ribosome interact with GTP-bound translation factors. Is thus essential for accurate translation. This Blochmanniella floridana protein is Large ribosomal subunit protein bL12.